The following is a 104-amino-acid chain: Astakine (104 aa).

Positions 1–22 (MKMRGVSVGVLVVAMMSGLAMA) are cleaved as a signal peptide. 5 disulfide bridges follow: C25/C38, C32/C50, C37/C76, C60/C84, and C78/C91.

This sequence belongs to the AVIT (prokineticin) family.

The protein localises to the secreted. Its function is as follows. Cytokine directly involved in hematopoiesis. This Pacifastacus leniusculus (Signal crayfish) protein is Astakine.